A 157-amino-acid polypeptide reads, in one-letter code: Crossover junction endodeoxyribonuclease RuvC (157 aa).

Active-site residues include D9, E70, and D142. Mg(2+) contacts are provided by D9, E70, and D142.

This sequence belongs to the RuvC family. Homodimer which binds Holliday junction (HJ) DNA. The HJ becomes 2-fold symmetrical on binding to RuvC with unstacked arms; it has a different conformation from HJ DNA in complex with RuvA. In the full resolvosome a probable DNA-RuvA(4)-RuvB(12)-RuvC(2) complex forms which resolves the HJ. Requires Mg(2+) as cofactor.

Its subcellular location is the cytoplasm. The catalysed reaction is Endonucleolytic cleavage at a junction such as a reciprocal single-stranded crossover between two homologous DNA duplexes (Holliday junction).. In terms of biological role, the RuvA-RuvB-RuvC complex processes Holliday junction (HJ) DNA during genetic recombination and DNA repair. Endonuclease that resolves HJ intermediates. Cleaves cruciform DNA by making single-stranded nicks across the HJ at symmetrical positions within the homologous arms, yielding a 5'-phosphate and a 3'-hydroxyl group; requires a central core of homology in the junction. The consensus cleavage sequence is 5'-(A/T)TT(C/G)-3'. Cleavage occurs on the 3'-side of the TT dinucleotide at the point of strand exchange. HJ branch migration catalyzed by RuvA-RuvB allows RuvC to scan DNA until it finds its consensus sequence, where it cleaves and resolves the cruciform DNA. This is Crossover junction endodeoxyribonuclease RuvC from Cyanothece sp. (strain PCC 7425 / ATCC 29141).